We begin with the raw amino-acid sequence, 121 residues long: Huntingtin-interacting protein K (121 aa).

Over residues 1 to 13 the composition is skewed to acidic residues; sequence MATEGDVELELET. The disordered stretch occupies residues 1–75; that stretch reads MATEGDVELE…EQKAKQEREK (75 aa). 2 stretches are compositionally biased toward basic and acidic residues: residues 20-47 and 60-75; these read RPPEKPRKHDSGAADLERVTDYAEEKEI and GDRRSREQKAKQEREK. Phosphoserine is present on serine 30. The tract at residues 52-121 is required for association with the NAA10-NAA15 complex; sequence LETAMSVIGD…VVEALIALTN (70 aa). Residues 62 to 107 are a coiled coil; that stretch reads RRSREQKAKQEREKELAKVTIKKEDLELIMTEMEISRAAAERSLRE.

Component of the N-terminal acetyltransferase A (NatA)/HYPK complex at least composed of NAA10, NAA15 and HYPK, which has N-terminal acetyltransferase activity. Within the complex interacts with NAA10. Within the complex interacts with NAA15. Predominantly interacts with NAA15 in the NAA10-NAA15 complex (also called the NatA complex); the interaction with the NatA complex reduces the acetylation activity of the NatA complex. Interacts with HTT (via N-terminus). The NatA complex is required for HYPK stability and for reducing polyQ aggregation of HTT. Component of the N-terminal acetyltransferase E (NatE)/HYPK complex at least composed of NAA10, NAA15, NAA50 and HYPK. Within the complex interacts with NAA10 and NAA15. Does not interact with NAA50. Interaction with NAA15 reduces the capacity of NAA15 to interact with NAA50. Its capacity to interact with the NatA complex is reduced by NAA50. Does not interact with the N-terminal acetyltransferase B (NatB) complex component NAA25 or the N-terminal acetyltransferase C (NatC) complex component NAA35.

The protein localises to the nucleus. Its subcellular location is the cytoplasm. Its function is as follows. Component of several N-terminal acetyltransferase complexes. Inhibits the N-terminal acetylation activity of the N-terminal acetyltransferase NAA10-NAA15 complex (also called the NatA complex). Has chaperone-like activity preventing polyglutamine (polyQ) aggregation of HTT in neuronal cells probably while associated with the NatA complex. May play a role in the NatA complex-mediated N-terminal acetylation of PCNP. In Homo sapiens (Human), this protein is Huntingtin-interacting protein K.